The following is a 300-amino-acid chain: MKRPDYRTLQALDAVIRERGFERAAQKLCITQSAVSQRIKQLENLFGQPLLVRTVPPRPTEQGQKLLALLHQVELLEEQWLGNEQGTDTPLLLSLAVNADSLATWLLPALHPVLADLPIRLNIQVEDETRTQEQLRRGEVVGAVSIQPQPLPSCLIDKLGALDYLFVASPEFATRHFPNGVTRSALLKAPAVAFDHLDDMHQAFLQQNFELSPGSVPCHIVNSSEAFVQLAKQGSTCCMIPHLQIDQELKNGELIDLTPGLCQRRMLYWHRFAPESRTMKKVTDALLKLGRQMLRQDDIN.

The HTH lysR-type domain maps to 4–60 (PDYRTLQALDAVIRERGFERAAQKLCITQSAVSQRIKQLENLFGQPLLVRTVPPRPT). Residues 21–40 (FERAAQKLCITQSAVSQRIK) constitute a DNA-binding region (H-T-H motif).

Belongs to the LysR transcriptional regulatory family. As to quaternary structure, homodimer.

Its function is as follows. Controls the transcription of genes involved in arginine and lysine metabolism. This is HTH-type transcriptional regulator ArgP from Photorhabdus laumondii subsp. laumondii (strain DSM 15139 / CIP 105565 / TT01) (Photorhabdus luminescens subsp. laumondii).